The primary structure comprises 149 residues: Endothelin-1 (149 aa).

Residues 1-33 (AAETVVSGAELSLTANSGGEKTPPHAPGLLRRS) constitute a propeptide that is removed on maturation. The disordered stretch occupies residues 6–26 (VSGAELSLTANSGGEKTPPHA). Cystine bridges form between cysteine 36–cysteine 50 and cysteine 38–cysteine 46. Positions 57–149 (VNTPGHIAPY…ISQQLGNGKK (93 aa)) are excised as a propeptide. The tract at residues 93–107 (CQCANQKDKKCWNFC) is endothelin-like.

The protein belongs to the endothelin/sarafotoxin family.

It is found in the secreted. Functionally, endothelins are endothelium-derived vasoconstrictor peptides. Probable ligand for G-protein coupled receptors EDNRA and EDNRB which activates PTK2B, BCAR1, BCAR3 and, GTPases RAP1 and RHOA cascade in glomerular mesangial cells. Also binds the DEAR/FBXW7-AS1 receptor. Promotes mesenteric arterial wall remodeling via activation of ROCK signaling and subsequent colocalization of NFATC3 with F-actin filaments. NFATC3 then translocates to the nucleus where it subsequently promotes the transcription of the smooth muscle hypertrophy and differentiation marker ACTA2. The protein is Endothelin-1 (EDN1) of Cavia porcellus (Guinea pig).